The primary structure comprises 236 residues: Uridylate kinase (236 aa).

ATP is bound at residue 11–14 (KFSG). Position 53 (Gly-53) interacts with UMP. Residues Gly-54 and Arg-58 each coordinate ATP. UMP is bound by residues Asp-73 and 134–141 (TGSPFFTT). Positions 161, 167, and 170 each coordinate ATP.

This sequence belongs to the UMP kinase family. As to quaternary structure, homohexamer.

The protein resides in the cytoplasm. It carries out the reaction UMP + ATP = UDP + ADP. The protein operates within pyrimidine metabolism; CTP biosynthesis via de novo pathway; UDP from UMP (UMPK route): step 1/1. With respect to regulation, inhibited by UTP. Its function is as follows. Catalyzes the reversible phosphorylation of UMP to UDP. In Hydrogenovibrio crunogenus (strain DSM 25203 / XCL-2) (Thiomicrospira crunogena), this protein is Uridylate kinase.